Reading from the N-terminus, the 346-residue chain is [LysW]-lysine/[LysW]-ornithine hydrolase (346 aa).

H68 lines the Zn(2+) pocket. The active site involves D70. A Zn(2+)-binding site is contributed by D92. Residue E122 is the Proton acceptor of the active site. Zn(2+) contacts are provided by E123, E146, and H317.

Belongs to the peptidase M20A family. LysK subfamily. It depends on Zn(2+) as a cofactor. Co(2+) serves as cofactor.

It is found in the cytoplasm. It carries out the reaction [amino-group carrier protein]-C-terminal-gamma-(L-lysyl)-L-glutamate + H2O = [amino-group carrier protein]-C-terminal-L-glutamate + L-lysine. It catalyses the reaction [amino-group carrier protein]-C-terminal-gamma-(L-ornithyl)-L-glutamate + H2O = [amino-group carrier protein]-C-terminal-L-glutamate + L-ornithine. Its pathway is amino-acid biosynthesis; L-lysine biosynthesis via AAA pathway; L-lysine from L-alpha-aminoadipate (Thermus route): step 5/5. It functions in the pathway amino-acid biosynthesis; L-arginine biosynthesis. In terms of biological role, catalyzes the release of L-lysine from [LysW]-gamma-L-lysine and the release of L-ornithine from [LysW]-L-ornithine. The sequence is that of [LysW]-lysine/[LysW]-ornithine hydrolase from Saccharolobus islandicus (strain M.16.4 / Kamchatka #3) (Sulfolobus islandicus).